The following is a 469-amino-acid chain: Pancreatic lipase-related protein 2 (469 aa).

The signal sequence occupies residues 1–17; sequence MLPSWTIGLLLLATVRG. Cys21 and Cys27 are oxidised to a cystine. The N-linked (GlcNAc...) asparagine glycan is linked to Asn71. Positions 93–105 are required for galactolipase activity; that stretch reads IHGFIDDGDSGWP. The cysteines at positions 109 and 120 are disulfide-linked. The active-site Nucleophile is Ser171. Asp195 functions as the Charge relay system in the catalytic mechanism. Residues Glu206, Arg209, Asp211, and Asp214 each coordinate Ca(2+). Cys256 and Cys280 are disulfide-bonded. Residues 257-279 are required for galactolipase activity; that stretch reads QKNILSTIIDINGIWQGIQDFVA. His282 (charge relay system) is an active-site residue. 2 cysteine pairs are disulfide-bonded: Cys304–Cys315 and Cys318–Cys323. Asn353, Asn399, and Asn455 each carry an N-linked (GlcNAc...) asparagine glycan. Residues 357–469 form the PLAT domain; it reads WRYRVSVTLA…ENALQTLYPC (113 aa). A disulfide bridge connects residues Cys453 and Cys469.

It belongs to the AB hydrolase superfamily. Lipase family.

It is found in the secreted. Its subcellular location is the zymogen granule membrane. The protein resides in the cell projection. It localises to the neuron projection. The catalysed reaction is a triacylglycerol + H2O = a diacylglycerol + a fatty acid + H(+). It carries out the reaction a 1,2-diacyl-3-O-(beta-D-galactosyl)-sn-glycerol + 2 H2O = 3-beta-D-galactosyl-sn-glycerol + 2 a fatty acid + 2 H(+). It catalyses the reaction 1,2,3-tri-(9Z-octadecenoyl)-glycerol + H2O = di-(9Z)-octadecenoylglycerol + (9Z)-octadecenoate + H(+). The enzyme catalyses di-(9Z)-octadecenoylglycerol + H2O = (9Z-octadecenoyl)-glycerol + (9Z)-octadecenoate + H(+). The catalysed reaction is (9Z-octadecenoyl)-glycerol + H2O = glycerol + (9Z)-octadecenoate + H(+). It carries out the reaction 1-(9Z-octadecenoyl)-glycerol + H2O = glycerol + (9Z)-octadecenoate + H(+). It catalyses the reaction 1,2,3-tripropanoylglycerol + H2O = dipropanoylglycerol + propanoate + H(+). The enzyme catalyses 1,2,3-tributanoylglycerol + H2O = dibutanoylglycerol + butanoate + H(+). The catalysed reaction is 1,2,3-trioctanoylglycerol + H2O = dioctanoylglycerol + octanoate + H(+). It carries out the reaction 1,2-didecanoylglycerol + H2O = decanoylglycerol + decanoate + H(+). It catalyses the reaction long chain 1,2-diacyl-3-O-beta-D-galactosyl-sn-glycerol + H2O = long chain acyl-3-O-beta-D-galactosyl-sn-glycerol + a fatty acid + H(+). The enzyme catalyses 1,2-dioctanoyl-3-O-beta-D-galactosyl-sn-glycerol + H2O = octanoyl-3-(beta-D-galactosyl)-sn-glycerol + octanoate + H(+). The catalysed reaction is 1,2-didodecanoyl-3-beta-D-galactosyl-sn-glycerol + H2O = dodecanoyl-3-beta-D-galactosyl-sn-glycerol + dodecanoate + H(+). It carries out the reaction 1-beta-D-galactosyl-2,3-didodecanoyl-sn-glycerol + H2O = 1-beta-D-galactosyl-dodecanoyl-sn-glycerol + dodecanoate + H(+). It catalyses the reaction a 1,2-diacyl-3-O-[alpha-D-galactosyl-(1-&gt;6)-beta-D-galactosyl]-sn-glycerol + H2O = acyl-3-O-[alpha-D-galactosyl-(1-&gt;6)-beta-D-galactosyl]-sn-glycerol + a fatty acid + H(+). The enzyme catalyses long chain 1,2-diacyl-3-O-[alpha-D-galactosyl-(1-&gt;6)-beta-D-galactosyl]-sn-glycerol + H2O = long chain acyl-3-O-[alpha-D-galactosyl-(1-&gt;6)-beta-D-galactosyl]-sn-glycerol + a fatty acid + H(+). The catalysed reaction is 1,2-dioctanoyl-3-O-[alpha-D-galactosyl-(1-&gt;6)-beta-D-galactosyl]-sn-glycerol + H2O = octanoyl-3-O-[alpha-D-galactosyl-(1-&gt;6)-beta-D-galactosyl]-sn-glycerol + octanoate + H(+). It carries out the reaction 1,2-didodecanoyl-3-O-[alpha-D-galactosyl-(1-&gt;6)-beta-D-galactosyl]-sn-glycerol + H2O = dodecanoyl-3-O-[alpha-D-galactosyl-(1-&gt;6)-beta-D-galactosyl]-sn-glycerol + dodecanoate + H(+). It catalyses the reaction a 1,2-diacyl-sn-glycero-3-phosphocholine + H2O = a monoacyl-sn-glycero-3-phosphocholine + a fatty acid + H(+). Its pathway is glycerolipid metabolism; triacylglycerol degradation. It functions in the pathway glycolipid metabolism. Its function is as follows. Lipase that primarily hydrolyzes triglycerides and galactosylglycerides. In neonates, may play a major role in pancreatic digestion of dietary fats such as milk fat globules enriched in long-chain triglycerides. Hydrolyzes short-, medium- and long-chain fatty acyls in triglycerides without apparent positional specificity. Can completely deacylate triacylglycerols. When the liver matures and bile salt synthesis increases, likely functions mainly as a galactolipase and monoacylglycerol lipase. Hydrolyzes monogalactosyldiglycerols (MGDG) and digalactosyldiacylglycerols (DGDG) present in a plant-based diet, releasing long-chain polyunsaturated fatty acids. Hydrolyzes medium- and long-chain fatty acyls in galactolipids. May act together with LIPF to hydrolyze partially digested triglycerides. Hydrolyzes long-chain monoglycerides with high efficiency. In cytotoxic T cells, contributes to perforin-dependent cell lysis, but is unlikely to mediate direct cytotoxicity. Also has low phospholipase activity. In neurons, required for the localization of the phospholipid 1-oleoyl-2-palmitoyl-PC (OPPC) to neurite tips through acyl chain remodeling of membrane phospholipids. The resulting OPPC-rich lipid membrane domain recruits the t-SNARE protein STX4 by selectively interacting with the STX4 transmembrane domain and this promotes surface expression of the dopamine transporter SLC6A3/DAT at neurite tips by facilitating fusion of SLC6A3-containing transport vesicles with the plasma membrane. The protein is Pancreatic lipase-related protein 2 of Bos taurus (Bovine).